The following is a 93-amino-acid chain: Small ribosomal subunit protein uS19 (93 aa).

It belongs to the universal ribosomal protein uS19 family.

Protein S19 forms a complex with S13 that binds strongly to the 16S ribosomal RNA. The polypeptide is Small ribosomal subunit protein uS19 (Oleidesulfovibrio alaskensis (strain ATCC BAA-1058 / DSM 17464 / G20) (Desulfovibrio alaskensis)).